The sequence spans 250 residues: 3-deoxy-manno-octulosonate cytidylyltransferase (250 aa).

It belongs to the KdsB family.

Its subcellular location is the cytoplasm. It catalyses the reaction 3-deoxy-alpha-D-manno-oct-2-ulosonate + CTP = CMP-3-deoxy-beta-D-manno-octulosonate + diphosphate. It participates in nucleotide-sugar biosynthesis; CMP-3-deoxy-D-manno-octulosonate biosynthesis; CMP-3-deoxy-D-manno-octulosonate from 3-deoxy-D-manno-octulosonate and CTP: step 1/1. The protein operates within bacterial outer membrane biogenesis; lipopolysaccharide biosynthesis. Activates KDO (a required 8-carbon sugar) for incorporation into bacterial lipopolysaccharide in Gram-negative bacteria. This is 3-deoxy-manno-octulosonate cytidylyltransferase from Janthinobacterium sp. (strain Marseille) (Minibacterium massiliensis).